Consider the following 1524-residue polypeptide: DNA polymerase alpha catalytic subunit (1524 aa).

Disordered stretches follow at residues 1–53 and 68–139; these read MSGD…QKPI and RRRE…KVNP. Positions 20–30 are enriched in basic and acidic residues; sequence SSRKDTLERLK. Acidic residues predominate over residues 79–96; the sequence is EDGEGGDLGYLDEGEEED. The Zn(2+) site is built by Cys1333, Cys1336, Cys1375, Cys1378, Cys1414, Cys1419, Cys1440, and Cys1446. A CysA-type zinc finger spans residues 1333–1378; sequence CPSCSTAFNCPSIISSVCASISKKPATPETEESDSTFWLKLHCPKC. The short motif at 1414–1446 is the CysB motif element; sequence CEDESCKHTTRSPNFRLLGERERGTVCPNYPNC.

Belongs to the DNA polymerase type-B family.

It localises to the nucleus. It catalyses the reaction DNA(n) + a 2'-deoxyribonucleoside 5'-triphosphate = DNA(n+1) + diphosphate. Polymerase alpha in a complex with DNA primase is a replicative polymerase. This chain is DNA polymerase alpha catalytic subunit (POLA), found in Arabidopsis thaliana (Mouse-ear cress).